Reading from the N-terminus, the 251-residue chain is Isoprenyl transferase (251 aa).

The active site involves D24. D24 is a binding site for Mg(2+). Substrate is bound by residues 25–28, W29, R37, H41, and 69–71; these read GNGR and STE. N72 acts as the Proton acceptor in catalysis. Substrate-binding positions include W73, R75, R186, and 192–194; that span reads RIS. Residue E205 coordinates Mg(2+).

The protein belongs to the UPP synthase family. In terms of assembly, homodimer. Mg(2+) is required as a cofactor.

Its function is as follows. Catalyzes the condensation of isopentenyl diphosphate (IPP) with allylic pyrophosphates generating different type of terpenoids. This is Isoprenyl transferase from Chromobacterium violaceum (strain ATCC 12472 / DSM 30191 / JCM 1249 / CCUG 213 / NBRC 12614 / NCIMB 9131 / NCTC 9757 / MK).